A 294-amino-acid chain; its full sequence is Acetyl-coenzyme A carboxylase carboxyl transferase subunit beta (294 aa).

The 265-residue stretch at 30 to 294 folds into the CoA carboxyltransferase N-terminal domain; the sequence is IMTKCPECKK…PEVGGEADGE (265 aa). Zn(2+)-binding residues include cysteine 34, cysteine 37, cysteine 53, and cysteine 56. Residues 34–56 form a C4-type zinc finger; the sequence is CPECKKIMYTKELQKNLMVCNYC.

Belongs to the AccD/PCCB family. As to quaternary structure, acetyl-CoA carboxylase is a heterohexamer composed of biotin carboxyl carrier protein (AccB), biotin carboxylase (AccC) and two subunits each of ACCase subunit alpha (AccA) and ACCase subunit beta (AccD). Zn(2+) serves as cofactor.

Its subcellular location is the cytoplasm. The catalysed reaction is N(6)-carboxybiotinyl-L-lysyl-[protein] + acetyl-CoA = N(6)-biotinyl-L-lysyl-[protein] + malonyl-CoA. It participates in lipid metabolism; malonyl-CoA biosynthesis; malonyl-CoA from acetyl-CoA: step 1/1. Component of the acetyl coenzyme A carboxylase (ACC) complex. Biotin carboxylase (BC) catalyzes the carboxylation of biotin on its carrier protein (BCCP) and then the CO(2) group is transferred by the transcarboxylase to acetyl-CoA to form malonyl-CoA. This Listeria monocytogenes serotype 4b (strain F2365) protein is Acetyl-coenzyme A carboxylase carboxyl transferase subunit beta.